The following is a 399-amino-acid chain: Elongation factor Tu (399 aa).

The tr-type G domain maps to 10–204 (KPHVNIGTIG…AVDASIPEPE (195 aa)). A G1 region spans residues 19 to 26 (GHVDHGKT). Residue 19-26 (GHVDHGKT) participates in GTP binding. Thr26 is a Mg(2+) binding site. Positions 60-64 (GITIN) are G2. The tract at residues 81–84 (DCPG) is G3. Residues 81–85 (DCPGH) and 136–139 (NKCD) each bind GTP. The interval 136–139 (NKCD) is G4. Residues 174-176 (SGL) form a G5 region.

The protein belongs to the TRAFAC class translation factor GTPase superfamily. Classic translation factor GTPase family. EF-Tu/EF-1A subfamily. Monomer.

Its subcellular location is the cytoplasm. It catalyses the reaction GTP + H2O = GDP + phosphate + H(+). In terms of biological role, GTP hydrolase that promotes the GTP-dependent binding of aminoacyl-tRNA to the A-site of ribosomes during protein biosynthesis. In Prochlorococcus marinus (strain MIT 9515), this protein is Elongation factor Tu.